Here is a 427-residue protein sequence, read N- to C-terminus: Adenylosuccinate synthetase (427 aa).

Residues 12-18 (GDEGKGK) and 40-42 (GHT) each bind GTP. Asp-13 functions as the Proton acceptor in the catalytic mechanism. Residues Asp-13 and Gly-40 each coordinate Mg(2+). IMP contacts are provided by residues 13–16 (DEGK), 38–41 (NAGH), Thr-128, Arg-142, Gln-223, Thr-238, and Arg-302. The Proton donor role is filled by His-41. 298-304 (VTTGRAR) is a binding site for substrate. Residues Arg-304, 330–332 (KLD), and 412–414 (GVG) each bind GTP.

The protein belongs to the adenylosuccinate synthetase family. As to quaternary structure, homodimer. It depends on Mg(2+) as a cofactor.

It is found in the cytoplasm. The enzyme catalyses IMP + L-aspartate + GTP = N(6)-(1,2-dicarboxyethyl)-AMP + GDP + phosphate + 2 H(+). It functions in the pathway purine metabolism; AMP biosynthesis via de novo pathway; AMP from IMP: step 1/2. In terms of biological role, plays an important role in the de novo pathway of purine nucleotide biosynthesis. Catalyzes the first committed step in the biosynthesis of AMP from IMP. The polypeptide is Adenylosuccinate synthetase (Frankia casuarinae (strain DSM 45818 / CECT 9043 / HFP020203 / CcI3)).